A 134-amino-acid polypeptide reads, in one-letter code: Large ribosomal subunit protein uL14 (134 aa).

Belongs to the universal ribosomal protein uL14 family. As to quaternary structure, part of the 50S ribosomal subunit. Forms a cluster with proteins L3 and L19. In the 70S ribosome, L14 and L19 interact and together make contacts with the 16S rRNA in bridges B5 and B8.

Its function is as follows. Binds to 23S rRNA. Forms part of two intersubunit bridges in the 70S ribosome. This chain is Large ribosomal subunit protein uL14, found in Deinococcus deserti (strain DSM 17065 / CIP 109153 / LMG 22923 / VCD115).